Consider the following 143-residue polypeptide: uncharacterized protein (143 aa).

The chain crosses the membrane as a helical span at residues 4–24 (FGIVALSIICSIAFLFVAYGV). The interval 97-143 (TVPFVNTEAPPPRLSSSFSRQSGENAETQSQVSASPFNDKNSPYVQE) is disordered. Polar residues predominate over residues 110–143 (LSSSFSRQSGENAETQSQVSASPFNDKNSPYVQE).

It is found in the golgi apparatus membrane. This is an uncharacterized protein from Schizosaccharomyces pombe (strain 972 / ATCC 24843) (Fission yeast).